Reading from the N-terminus, the 423-residue chain is Limonoid 21-O-acetyltransferse (423 aa).

Catalysis depends on proton acceptor residues H152 and D362.

The protein belongs to the plant acyltransferase family. In terms of assembly, monomer. Mainly expressed in petioles.

The enzyme catalyses isomeliandiol + acetyl-CoA = 21-O-acetyl-isomeliandiol + CoA. The protein operates within secondary metabolite biosynthesis; terpenoid biosynthesis. Acetyltransferase involved in the biosynthesis of limonoids triterpene natural products such as azadirachtin, an antifeedant widely used as bioinsecticide, and possessing many medicinal applications including anti-tumoral, anti-malarial, anti-rheumatic, antibacterial, anti-inflammatory, anti-pyretic and diuretic effects. Catalyzes the formation of 21-O-acetyl-isomeliandiol from isomeliandiol. The chain is Limonoid 21-O-acetyltransferse from Melia azedarach (Chinaberry tree).